Here is a 200-residue protein sequence, read N- to C-terminus: Small ribosomal subunit protein uS4 (200 aa).

The 64-residue stretch at 92–155 (SRLDAVVYQL…QKLNIIAESV (64 aa)) folds into the S4 RNA-binding domain.

The protein belongs to the universal ribosomal protein uS4 family. As to quaternary structure, part of the 30S ribosomal subunit. Contacts protein S5. The interaction surface between S4 and S5 is involved in control of translational fidelity.

Functionally, one of the primary rRNA binding proteins, it binds directly to 16S rRNA where it nucleates assembly of the body of the 30S subunit. With S5 and S12 plays an important role in translational accuracy. This is Small ribosomal subunit protein uS4 from Macrococcus caseolyticus (strain JCSC5402) (Macrococcoides caseolyticum).